The primary structure comprises 125 residues: MINSPRVCVQVQSVYIESQSSPEEERYVFAYTVTIRNLGRSQVQLLGRYWLITNGHGRETEVQGEGVVGEQPHIPAGGEYQYTSGAVIETPLGTMQGHYEMIDIDGAPFRIEIPVFRLAVPTLIH.

In terms of domain architecture, ApaG spans 1–125 (MINSPRVCVQ…FRLAVPTLIH (125 aa)).

This chain is Protein ApaG, found in Klebsiella pneumoniae (strain 342).